The following is a 377-amino-acid chain: N5-carboxyaminoimidazole ribonucleotide synthase (377 aa).

Residues R93, K133, 138–144 (GYDGKGQ), 175–178 (EEFV), E183, H206, and 257–258 (NE) each bind ATP. In terms of domain architecture, ATP-grasp spans 97 to 287 (KALLDHAGVR…QFENHLRAVC (191 aa)).

It belongs to the PurK/PurT family. As to quaternary structure, homodimer.

The enzyme catalyses 5-amino-1-(5-phospho-beta-D-ribosyl)imidazole + hydrogencarbonate + ATP = 5-carboxyamino-1-(5-phospho-D-ribosyl)imidazole + ADP + phosphate + 2 H(+). Its pathway is purine metabolism; IMP biosynthesis via de novo pathway; 5-amino-1-(5-phospho-D-ribosyl)imidazole-4-carboxylate from 5-amino-1-(5-phospho-D-ribosyl)imidazole (N5-CAIR route): step 1/2. In terms of biological role, catalyzes the ATP-dependent conversion of 5-aminoimidazole ribonucleotide (AIR) and HCO(3)(-) to N5-carboxyaminoimidazole ribonucleotide (N5-CAIR). The chain is N5-carboxyaminoimidazole ribonucleotide synthase from Vibrio vulnificus (strain CMCP6).